The chain runs to 156 residues: Small ribosomal subunit protein uS7 (156 aa).

The protein belongs to the universal ribosomal protein uS7 family. As to quaternary structure, part of the 30S ribosomal subunit. Contacts proteins S9 and S11.

Functionally, one of the primary rRNA binding proteins, it binds directly to 16S rRNA where it nucleates assembly of the head domain of the 30S subunit. Is located at the subunit interface close to the decoding center, probably blocks exit of the E-site tRNA. The sequence is that of Small ribosomal subunit protein uS7 from Nitrosococcus oceani (strain ATCC 19707 / BCRC 17464 / JCM 30415 / NCIMB 11848 / C-107).